A 601-amino-acid chain; its full sequence is Beta-phellandrene synthase (601 aa).

The N-terminal 35 residues, 1 to 35 (MSTISIHHVGILRNPLPSKNKRALINNPWSLSLPR), are a transit peptide targeting the chloroplast. Mn(2+) contacts are provided by Asp356 and Asp360. The DDXXD motif signature appears at 356–360 (DDVYD). Homodimerization stretches follow at residues 362 to 368 (YGTLDEL) and 434 to 471 (EAKW…LSIP). Mn(2+) is bound by residues Asp499 and Glu507.

Belongs to the terpene synthase family. In terms of assembly, homodimer. Requires Mn(2+) as cofactor. Mg(2+) serves as cofactor. As to expression, expressed in peltate glandular trichomes. Present at low levels in flowers, leaves and stems.

It is found in the plastid. The protein resides in the chloroplast. The catalysed reaction is (2E)-geranyl diphosphate = beta-phellandrene + diphosphate. The enzyme catalyses (2E)-geranyl diphosphate = (1R,5R)-sabinene + diphosphate. It functions in the pathway secondary metabolite biosynthesis; terpenoid biosynthesis. Functionally, involved in the biosynthesis of phenolic monoterpenes natural products. Monoterpene synthase that catalyzes mainly the formation of olefins such as sabinene and beta-phellandrene, and minor amounts of other monoterpenes (e.g. myrcene, gamma-terpinene, alpha-thujene and alpha-pinene) from geranyl diphosphate (GPP). The chain is Beta-phellandrene synthase from Origanum vulgare (Wild marjoram).